A 175-amino-acid polypeptide reads, in one-letter code: NADH-ubiquinone oxidoreductase chain 6 (175 aa).

Helical transmembrane passes span 1–21, 27–47, 49–69, 88–108, and 149–169; these read MMTY…VGFS, VYGG…IMNF, GSFL…VVFG, VVFG…LYVL, and YGMW…VVVM.

This sequence belongs to the complex I subunit 6 family. As to quaternary structure, core subunit of respiratory chain NADH dehydrogenase (Complex I) which is composed of 45 different subunits.

The protein localises to the mitochondrion inner membrane. It catalyses the reaction a ubiquinone + NADH + 5 H(+)(in) = a ubiquinol + NAD(+) + 4 H(+)(out). In terms of biological role, core subunit of the mitochondrial membrane respiratory chain NADH dehydrogenase (Complex I) which catalyzes electron transfer from NADH through the respiratory chain, using ubiquinone as an electron acceptor. Essential for the catalytic activity and assembly of complex I. The protein is NADH-ubiquinone oxidoreductase chain 6 (MT-ND6) of Pteropus scapulatus (Little red flying fox).